The following is a 109-amino-acid chain: Putative double-stranded DNA mimic protein YciU (109 aa).

This sequence belongs to the putative dsDNA mimic protein family.

Functionally, may act as a double-stranded DNA (dsDNA) mimic. Probably regulates the activity of a dsDNA-binding protein. The sequence is that of Putative double-stranded DNA mimic protein YciU from Escherichia coli O45:K1 (strain S88 / ExPEC).